The following is a 234-amino-acid chain: DNA repair protein RecO (234 aa).

This sequence belongs to the RecO family.

In terms of biological role, involved in DNA repair and RecF pathway recombination. This Hamiltonella defensa subsp. Acyrthosiphon pisum (strain 5AT) protein is DNA repair protein RecO.